The primary structure comprises 546 residues: Chaperonin GroEL (546 aa).

ATP contacts are provided by residues 30 to 33 (TLGP), lysine 51, 87 to 91 (DGTTT), glycine 415, 479 to 481 (NAA), and aspartate 495.

Belongs to the chaperonin (HSP60) family. As to quaternary structure, forms a cylinder of 14 subunits composed of two heptameric rings stacked back-to-back. Interacts with the co-chaperonin GroES.

It is found in the cytoplasm. The enzyme catalyses ATP + H2O + a folded polypeptide = ADP + phosphate + an unfolded polypeptide.. Functionally, together with its co-chaperonin GroES, plays an essential role in assisting protein folding. The GroEL-GroES system forms a nano-cage that allows encapsulation of the non-native substrate proteins and provides a physical environment optimized to promote and accelerate protein folding. In Xanthomonas campestris pv. phaseoli, this protein is Chaperonin GroEL.